The chain runs to 547 residues: Mucin-13 (547 aa).

The span at M1–S210 shows a compositional bias: low complexity. A disordered region spans residues M1–P218. An EGF-like 1 domain is found at S210–V249. 3 cysteine pairs are disulfide-bonded: C214–C225, C219–C234, and C236–C248. 3 N-linked (GlcNAc...) asparagine glycosylation sites follow: N243, N244, and N263. In terms of domain architecture, SEA spans K250–D366. EGF-like domains lie at Q361 to V401 and V401 to E441. Cystine bridges form between C365-C378, C370-C384, C386-C400, C409-C427, and C429-C440. Residues I459 to I479 traverse the membrane as a helical segment. The Cytoplasmic segment spans residues V480 to Y547. Residues K525–Y547 are disordered.

In terms of assembly, homodimer of beta subunits. Post-translationally, cleaved into two subunits, alpha and beta, probably between the first EGF domain and the SEA domain. Beta subunit contains the cytoplasmic tail and alpha subunit the extracellular tail. The homooligomerization into dimers is dependent on intrachain disulfide bonds. Highly glycosylated.

It localises to the cell membrane. The protein resides in the secreted. Its function is as follows. Epithelial and hemopoietic transmembrane mucin that may play a role in cell signaling. This is Mucin-13 (Muc13) from Rattus norvegicus (Rat).